Reading from the N-terminus, the 403-residue chain is Solanesyl-diphosphate synthase 2, chloroplastic (403 aa).

A chloroplast-targeting transit peptide spans 1–62 (MLSVSCPRVY…QPGLAAVDVP (62 aa)). Isopentenyl diphosphate contacts are provided by K123, R126, and H161. Positions 168 and 172 each coordinate Mg(2+). An all-trans-polyprenyl diphosphate is bound at residue R177. R178 contacts isopentenyl diphosphate. An all-trans-polyprenyl diphosphate is bound by residues K254, T255, Q292, and K309.

Belongs to the FPP/GGPP synthase family. In terms of assembly, homodimer. Interacts with FBN5. It depends on Mg(2+) as a cofactor. In terms of tissue distribution, expressed in leaves, stems and roots. Highest expression in leaves and roots.

It localises to the plastid. The protein resides in the chloroplast. The catalysed reaction is 7 isopentenyl diphosphate + (2E)-geranyl diphosphate = all-trans-nonaprenyl diphosphate + 7 diphosphate. Its function is as follows. Involved in providing solanesyl diphosphate for plastoquinone-9 (PQ-9) formation. Geranyl diphosphate is the preferred substrate. The chain is Solanesyl-diphosphate synthase 2, chloroplastic from Oryza sativa subsp. japonica (Rice).